Here is a 112-residue protein sequence, read N- to C-terminus: Cell cycle protein GpsB (112 aa).

Residues 42–77 (YQKMADMNNEVVKLSEENNKLKKEVEELRLRVATSR) are a coiled coil. The tract at residues 75-97 (TSRPSDNKSFSSNNSSSSNNNVD) is disordered. Residues 81-95 (NKSFSSNNSSSSNNN) are compositionally biased toward low complexity.

Belongs to the GpsB family. Forms polymers through the coiled coil domains. Interacts with PBP1, MreC and EzrA.

The protein resides in the cytoplasm. Functionally, divisome component that associates with the complex late in its assembly, after the Z-ring is formed, and is dependent on DivIC and PBP2B for its recruitment to the divisome. Together with EzrA, is a key component of the system that regulates PBP1 localization during cell cycle progression. Its main role could be the removal of PBP1 from the cell pole after pole maturation is completed. Also contributes to the recruitment of PBP1 to the division complex. Not essential for septum formation. The chain is Cell cycle protein GpsB from Staphylococcus haemolyticus (strain JCSC1435).